Reading from the N-terminus, the 178-residue chain is Large ribosomal subunit protein uL16 (178 aa).

Belongs to the universal ribosomal protein uL16 family.

This Saccharolobus solfataricus (strain ATCC 35092 / DSM 1617 / JCM 11322 / P2) (Sulfolobus solfataricus) protein is Large ribosomal subunit protein uL16.